The chain runs to 103 residues: Large ribosomal subunit protein uL24 (103 aa).

This sequence belongs to the universal ribosomal protein uL24 family. In terms of assembly, part of the 50S ribosomal subunit.

Functionally, one of two assembly initiator proteins, it binds directly to the 5'-end of the 23S rRNA, where it nucleates assembly of the 50S subunit. In terms of biological role, one of the proteins that surrounds the polypeptide exit tunnel on the outside of the subunit. This is Large ribosomal subunit protein uL24 from Enterococcus faecalis (strain ATCC 700802 / V583).